The chain runs to 127 residues: MEMTYYEKTPLIRQFLNNGKTNSWFYVKHEMLQPGGSFKSRGIGHLIRKSNEEALSEGSGKLAVFSSSGGNAGLAAATACRSMALNCSVVVPKTTKPRMVKKIQSAGAKVIIHGDHWGEADEYLRHE.

K39 is subject to N6-(pyridoxal phosphate)lysine.

This sequence belongs to the serine/threonine dehydratase family. Pyridoxal 5'-phosphate serves as cofactor.

It is found in the cytoplasm. The catalysed reaction is L-serine = pyruvate + NH4(+). Its pathway is carbohydrate biosynthesis; gluconeogenesis. The sequence is that of Putative truncated L-serine dehydratase YIL168W from Saccharomyces cerevisiae (strain ATCC 204508 / S288c) (Baker's yeast).